We begin with the raw amino-acid sequence, 693 residues long: Phenoloxidase subunit 2 (693 aa).

Residues 1–51 (MADVFESLELLFDRPNEPLITPKGENNSVFQLTEQFLTEDYANNGIELNNR) constitute a propeptide that is removed on maturation. Asn26 and Asn64 each carry an N-linked (GlcNAc...) asparagine glycan. Residues His213, His217, and His243 each coordinate Cu cation. Glu351 serves as the catalytic Proton acceptor. His366, His370, and His406 together coordinate Cu cation. Residues Asn462 and Asn494 are each glycosylated (N-linked (GlcNAc...) asparagine). 2 cysteine pairs are disulfide-bonded: Cys583–Cys627 and Cys585–Cys634. Asn680 carries N-linked (GlcNAc...) asparagine glycosylation.

As to quaternary structure, heterodimer. It depends on Cu(2+) as a cofactor. Post-translationally, the N-terminus is blocked. Synthesized by hemocytes and released into the hemolymph plasma.

The protein resides in the secreted. It catalyses the reaction 2 L-dopa + O2 = 2 L-dopaquinone + 2 H2O. The catalysed reaction is L-tyrosine + O2 = L-dopaquinone + H2O. In terms of biological role, this is a copper-containing oxidase that functions in the formation of pigments such as melanins and other polyphenolic compounds. Catalyzes the rate-limiting conversions of tyrosine to DOPA, DOPA to DOPA-quinone and possibly 5,6 dihydroxyindole to indole-5'6 quinone. In Bombyx mori (Silk moth), this protein is Phenoloxidase subunit 2.